Here is a 31-residue protein sequence, read N- to C-terminus: Sarcolipin (31 aa).

The Cytoplasmic portion of the chain corresponds to 1 to 7; sequence MGINTRE. The chain crosses the membrane as a helical span at residues 8–26; that stretch reads LFLNFTIVLITVILMWLLV. Residues 27–31 lie on the Lumenal side of the membrane; it reads RSYQY.

Belongs to the sarcolipin family. Homooligomer. Can also form heterooligomers with other sarcoplasmic/endoplasmic reticulum calcium ATPase (SERCA) regulators ARLN, ERLN, PLN and STRIT1/DWORF. Monomer. Interacts with calcium ATPase ATP2A1/SERCA1. Interacts as a monomer with ATP2A2/SERCA2; the interaction decreases ATP2A2 Ca(2+) affinity. Interacts with VMP1; VMP1 competes with PLN and SLN to prevent them from forming an inhibitory complex with ATP2A2.

The protein resides in the sarcoplasmic reticulum membrane. It localises to the endoplasmic reticulum membrane. Functionally, reversibly inhibits the activity of ATP2A1/SERCA1 and ATP2A2/SERCA2 in sarcoplasmic reticulum by decreasing the apparent affinity of the ATPase for Ca(2+). Also inhibits the activity of ATP2A3/SERCA3. Modulates calcium re-uptake during muscle relaxation and plays an important role in calcium homeostasis in muscle. Required for muscle-based, non-shivering thermogenesis. The polypeptide is Sarcolipin (Homo sapiens (Human)).